The sequence spans 343 residues: Versiconal hemiacetal acetate reductase (343 aa).

Tyr59 functions as the Proton donor in the catalytic mechanism. His144 contributes to the substrate binding site. 229–239 contributes to the NADP(+) binding site; that stretch reads SPVARGALARP.

The protein belongs to the aldo/keto reductase family. Aldo/keto reductase 2 subfamily.

The catalysed reaction is (2S)-versicolorone + NADP(+) = 1'-hydroxyversicolorone + NADPH + H(+). It catalyses the reaction (3S)-versiconol acetate + NADP(+) = (2S,3S)-versiconal hemiacetal acetate + NADPH + H(+). The enzyme catalyses (S)-versiconol + NADP(+) = (2S-3S)-versiconal hemiacetal + NADPH + H(+). Functionally, catalyzes 3 reactions: from hydroxyversicolorone (HVN) to versicolorone (VONE), from versiconal hemiacetal acetate (VHA) to versiconol acetate (VOAc) and from versiconal (VHOH) to versiconol (VOH). Probably not an aflatoxin biosynthesis gene: may be involved in the vertical branching steps connecting the main pathway from HVN to VHOH with the side pathway from VONE to VOH. This Aspergillus parasiticus protein is Versiconal hemiacetal acetate reductase (vrdA).